The chain runs to 105 residues: uncharacterized protein (105 aa).

2 helical membrane-spanning segments follow: residues 7 to 26 and 30 to 52; these read VLSV…WLSL and VDMT…LISI.

It is found in the cell membrane. This is an uncharacterized protein from Archaeoglobus fulgidus (strain ATCC 49558 / DSM 4304 / JCM 9628 / NBRC 100126 / VC-16).